Consider the following 169-residue polypeptide: 16S rRNA aminocarboxypropyltransferase (169 aa).

Positions 17, 67, 90, and 109 each coordinate S-adenosyl-L-methionine.

The protein belongs to the TDD superfamily. TSR3 family.

Its subcellular location is the cytoplasm. It catalyses the reaction an N(1)-methylpseudouridine in rRNA + S-adenosyl-L-methionine = N(1)-methyl-N(3)-[(3S)-3-amino-3-carboxypropyl]pseudouridine in rRNA + S-methyl-5'-thioadenosine + H(+). Aminocarboxypropyltransferase that catalyzes the aminocarboxypropyl transfer on pseudouridine corresponding to position 914 in M.jannaschii 16S rRNA. It constitutes the last step in biosynthesis of the hypermodified N1-methyl-N3-(3-amino-3-carboxypropyl) pseudouridine (m1acp3-Psi). This chain is 16S rRNA aminocarboxypropyltransferase, found in Methanothermobacter thermautotrophicus (strain ATCC 29096 / DSM 1053 / JCM 10044 / NBRC 100330 / Delta H) (Methanobacterium thermoautotrophicum).